The chain runs to 1028 residues: Contactin-6 (1028 aa).

The N-terminal stretch at 1 to 19 is a signal peptide; that stretch reads MRLLWKLVILLPLINSSAG. 6 consecutive Ig-like C2-type domains span residues 26 to 117, 122 to 208, 227 to 308, 318 to 402, 408 to 495, and 499 to 587; these read PIFT…AKLQ, EDFE…RSVQ, PKIE…RNLA, PEWE…AELR, PDFS…GSLI, and RTVI…ESLS. 6 cysteine pairs are disulfide-bonded: C50–C100, C144–C196, C249–C297, C339–C386, C431–C479, and C521–C577. N-linked (GlcNAc...) asparagine glycans are attached at residues N65 and N193. N368, N377, and N468 each carry an N-linked (GlcNAc...) asparagine glycan. 4 Fibronectin type-III domains span residues 600 to 698, 703 to 800, 805 to 901, and 902 to 996; these read PPED…TKAS, APVN…SGED, APRG…TKKS, and PPSQ…KMSS. Residues N659, N765, N860, and N865 are each glycosylated (N-linked (GlcNAc...) asparagine). The residue at position 882 (Y882) is a Phosphotyrosine. Polar residues predominate over residues 887-902; that stretch reads TGPSSPPVNVTTKKSP. Residues 887 to 908 form a disordered region; it reads TGPSSPPVNVTTKKSPPSQPPA. N895, N931, N956, and N957 each carry an N-linked (GlcNAc...) asparagine glycan. A lipid anchor (GPI-anchor amidated serine) is attached at S999. The propeptide at 1000-1028 is removed in mature form; sequence RGIQFLEPSTHFLSIVIVIFHCFAIQPLI.

It belongs to the immunoglobulin superfamily. Contactin family. In terms of assembly, interacts with PTPRG. In terms of tissue distribution, expressed in nervous system. Highly expressed in cerebellum. Expressed at intermediate level in thalamus, subthalamic nucleus. Weakly expressed in corpus callosum, caudate nucleus and spinal cord.

It localises to the cell membrane. Contactins mediate cell surface interactions during nervous system development. Participates in oligodendrocytes generation by acting as a ligand of NOTCH1. Its association with NOTCH1 promotes NOTCH1 activation through the released notch intracellular domain (NICD) and subsequent translocation to the nucleus. Involved in motor coordination. In Homo sapiens (Human), this protein is Contactin-6 (CNTN6).